The primary structure comprises 393 residues: Formate-dependent phosphoribosylglycinamide formyltransferase (393 aa).

Residues 22–23 (EL) and E82 contribute to the N(1)-(5-phospho-beta-D-ribosyl)glycinamide site. ATP is bound by residues R114, K155, 160–165 (SSGKGQ), 195–198 (EGFI), and E203. Positions 119 to 308 (RLAAEELDLP…QFALHARAIL (190 aa)) constitute an ATP-grasp domain. 2 residues coordinate Mg(2+): E267 and E279. Residues D286, K356, and 363–364 (RR) contribute to the N(1)-(5-phospho-beta-D-ribosyl)glycinamide site.

The protein belongs to the PurK/PurT family. As to quaternary structure, homodimer.

It carries out the reaction N(1)-(5-phospho-beta-D-ribosyl)glycinamide + formate + ATP = N(2)-formyl-N(1)-(5-phospho-beta-D-ribosyl)glycinamide + ADP + phosphate + H(+). It participates in purine metabolism; IMP biosynthesis via de novo pathway; N(2)-formyl-N(1)-(5-phospho-D-ribosyl)glycinamide from N(1)-(5-phospho-D-ribosyl)glycinamide (formate route): step 1/1. Involved in the de novo purine biosynthesis. Catalyzes the transfer of formate to 5-phospho-ribosyl-glycinamide (GAR), producing 5-phospho-ribosyl-N-formylglycinamide (FGAR). Formate is provided by PurU via hydrolysis of 10-formyl-tetrahydrofolate. This chain is Formate-dependent phosphoribosylglycinamide formyltransferase, found in Pseudomonas putida (strain GB-1).